The sequence spans 377 residues: Endolytic peptidoglycan transglycosylase RlpA (377 aa).

An N-terminal signal peptide occupies residues 1-19; sequence MHKQLPVICVAAGIVLLAA. Cys20 carries the N-palmitoyl cysteine lipid modification. A lipid anchor (S-diacylglycerol cysteine) is attached at Cys20. The segment at 196 to 277 is disordered; sequence LPPRPDLSGG…PVSAPVTAPA (82 aa). Composition is skewed to low complexity over residues 208-218 and 264-277; these read SASSAPAQPQG and PQTA…TAPA. Residues 300–376 form the SPOR domain; the sequence is AAASGRFVVQ…AQLQSFIASA (77 aa).

It belongs to the RlpA family.

Its subcellular location is the cell membrane. Lytic transglycosylase with a strong preference for naked glycan strands that lack stem peptides. The polypeptide is Endolytic peptidoglycan transglycosylase RlpA (Salmonella typhi).